A 369-amino-acid polypeptide reads, in one-letter code: Septin-5 (369 aa).

Threonine 13 carries the post-translational modification Phosphothreonine. In terms of domain architecture, Septin-type G spans lysine 41 to glutamine 314. The tract at residues glycine 51–serine 58 is G1 motif. GTP is bound by residues glycine 51 to serine 58, threonine 85, and glycine 111. Positions aspartate 108–glycine 111 are G3 motif. At arginine 168 the chain carries Omega-N-methylarginine. The tract at residues alanine 189–aspartate 192 is G4 motif. Lysine 190 to glutamate 198 lines the GTP pocket. Serine 225 carries the post-translational modification Phosphoserine. Positions 248 and 263 each coordinate GTP. The residue at position 327 (serine 327) is a Phosphoserine. Threonine 336 bears the Phosphothreonine mark. Positions aspartate 338–glutamine 369 form a coiled coil.

It belongs to the TRAFAC class TrmE-Era-EngA-EngB-Septin-like GTPase superfamily. Septin GTPase family. As to quaternary structure, septins polymerize into heterooligomeric protein complexes that form filaments, and can associate with cellular membranes, actin filaments and microtubules. GTPase activity is required for filament formation. Interacts with SEPTIN2 and SEPTIN5. Interaction with SEPTIN4 not detected. In platelets, associated with a complex containing STX4. Interacts with PRKN; this interaction leads to SEPTIN5 ubiquitination and degradation. Interacts with DYRK1A. Interacts with STX1A; in the cerebellar cortex. Phosphorylated by DYRK1A.

Its subcellular location is the cytoplasm. It localises to the cytoskeleton. Functionally, filament-forming cytoskeletal GTPase. Involved in cytokinesis (Potential). May play a role in platelet secretion. The sequence is that of Septin-5 from Mus musculus (Mouse).